The chain runs to 122 residues: Large ribosomal subunit protein uL14 (122 aa).

It belongs to the universal ribosomal protein uL14 family. In terms of assembly, part of the 50S ribosomal subunit. Forms a cluster with proteins L3 and L19. In the 70S ribosome, L14 and L19 interact and together make contacts with the 16S rRNA in bridges B5 and B8.

Binds to 23S rRNA. Forms part of two intersubunit bridges in the 70S ribosome. This is Large ribosomal subunit protein uL14 from Clostridium tetani (strain Massachusetts / E88).